Reading from the N-terminus, the 432-residue chain is Glycosyltransferase 6 (432 aa).

Topologically, residues 1-18 (MGKPGGAKTRTAVCLSDG) are cytoplasmic. Residues 19 to 39 (VFFLAGAFMSLTLVWSYFSIF) form a helical; Signal-anchor for type II membrane protein membrane-spanning segment. At 40 to 432 (SPSFTSLRHD…LPFDYPNEAW (393 aa)) the chain is on the lumenal side. N-linked (GlcNAc...) asparagine glycosylation occurs at N315.

This sequence belongs to the glycosyltransferase 34 family.

Its subcellular location is the golgi apparatus membrane. Probable glycosyltransferase that may be involved in the biosynthesis of xyloglucan. In Arabidopsis thaliana (Mouse-ear cress), this protein is Glycosyltransferase 6 (GT6).